The following is a 606-amino-acid chain: Sporulation kinase A (606 aa).

Residues 3 to 73 form the PAS 1 domain; that stretch reads QDTQHVKPLQ…SYFYNEHHLM (71 aa). In terms of domain architecture, PAC 1 spans 77 to 116; that stretch reads FRFIKKDHTIVWVEAAVEIVTTRAERTEREIILKMKVLEE. Residues 140–214 form the PAS 2 domain; it reads YITDDYERLV…IRMQKGMEVG (75 aa). The region spanning 218–255 is the PAC 2 domain; that stretch reads QTWKRLDGTPVHLEVKASPTVYKNQQAELLLLIDISSR. The PAS 3 domain occupies 265-335; the sequence is SRERYQLLIQ…ERIQNIAEQK (71 aa). The region spanning 402–606 is the Histidine kinase domain; sequence GIAHEIRNPL…TAFKISFPKK (205 aa). Phosphohistidine; by autocatalysis is present on His-405.

The enzyme catalyses ATP + protein L-histidine = ADP + protein N-phospho-L-histidine.. In terms of biological role, phosphorylates the sporulation-regulatory proteins spo0A and spo0F. It also autophosphorylates in the presence of ATP. This is Sporulation kinase A (kinA) from Bacillus subtilis (strain 168).